The following is a 1213-amino-acid chain: Filamin-A-interacting protein 1 (1213 aa).

Residues 1-70 (MRSRNQGGES…TSGECERKTK (70 aa)) are disordered. Positions 61-70 (TSGECERKTK) are enriched in basic and acidic residues. A Phosphoserine modification is found at serine 138. 2 coiled-coil regions span residues 192-591 (DYMN…ELSC) and 624-781 (PEDN…LSKR). Disordered stretches follow at residues 878–900 (NGPSITQEKGPRTNSSPGHPGEV) and 949–976 (KPRITIIPSPNVMPQKQKSGDTTLGPER). Polar residues-rich tracts occupy residues 880 to 894 (PSITQEKGPRTNSSP) and 960 to 970 (VMPQKQKSGDT). A Phosphoserine modification is found at serine 979. The tract at residues 1103–1213 (VSTGTVLRSP…STTSLGGGKG (111 aa)) is disordered. The segment covering 1125 to 1138 (VTSTITITPVTTSS) has biased composition (low complexity). Positions 1139–1156 (ARGTQSVSGQDGSSQRPT) are enriched in polar residues. Positions 1168-1179 (AGKPVVAAPGAG) are enriched in low complexity.

This sequence belongs to the FILIP1 family. As to quaternary structure, interacts with FLNA. Interacts with RHOD (in GTP-bound form). As to expression, moderately expressed in adult heart and brain. Weakly expressed in lung, skeletal muscle, ovary, testis, kidney, and fetal brain, and hardly detectable in liver, pancreas, spleen, and fetal liver. Within brain, moderate expression is found in amygdala and caudate nucleus. Expressed in skin fibroblasts.

It is found in the cytoplasm. It localises to the cytoskeleton. Functionally, by acting through a filamin-A/F-actin axis, it controls the start of neocortical cell migration from the ventricular zone. May be able to induce the degradation of filamin-A. The polypeptide is Filamin-A-interacting protein 1 (FILIP1) (Homo sapiens (Human)).